The sequence spans 196 residues: uncharacterized protein (196 aa).

It to E.coli YjaG.

This is an uncharacterized protein from Haemophilus influenzae (strain ATCC 51907 / DSM 11121 / KW20 / Rd).